The sequence spans 55 residues: Cytochrome c oxidase subunit 7s (55 aa).

A helical transmembrane segment spans residues 13 to 35 (LVQDIGVALILGSIAGCFFKYGV).

As to quaternary structure, slime mold cytochrome c oxidase consists of at least seven different polypeptides species, subunits I, II, III, IV, V, VI, and VIIe/s in order of MW.

The protein localises to the mitochondrion inner membrane. The catalysed reaction is 4 Fe(II)-[cytochrome c] + O2 + 8 H(+)(in) = 4 Fe(III)-[cytochrome c] + 2 H2O + 4 H(+)(out). Its function is as follows. This protein is one of the nuclear-coded polypeptide chains of cytochrome c oxidase, the terminal oxidase in mitochondrial electron transport. In Dictyostelium discoideum (Social amoeba), this protein is Cytochrome c oxidase subunit 7s (cxgS).